The primary structure comprises 272 residues: ATP synthase subunit a (272 aa).

Helical transmembrane passes span 39–59 (GFWAVHVDTLGWSLFMGLIFI), 103–123 (VAPLALTIFVWVFLMNSLKWI), 124–144 (PVDYIPGLAHAMGLPYFKIVP), 152–172 (FGISLGVFLLIIFYSIKVKGV), 181–201 (FTPFNHWALIPFNLFLEIIGL), 221–241 (VVFILIALLPFYVQWGLNVPW), and 242–262 (AIFHILVIPLQAFIFMVLTVV).

The protein belongs to the ATPase A chain family. F-type ATPases have 2 components, CF(1) - the catalytic core - and CF(0) - the membrane proton channel. CF(1) has five subunits: alpha(3), beta(3), gamma(1), delta(1), epsilon(1). CF(0) has three main subunits: a(1), b(2) and c(9-12). The alpha and beta chains form an alternating ring which encloses part of the gamma chain. CF(1) is attached to CF(0) by a central stalk formed by the gamma and epsilon chains, while a peripheral stalk is formed by the delta and b chains.

The protein resides in the cell inner membrane. Key component of the proton channel; it plays a direct role in the translocation of protons across the membrane. The chain is ATP synthase subunit a from Ectopseudomonas mendocina (strain ymp) (Pseudomonas mendocina).